Consider the following 313-residue polypeptide: Olfactory receptor 51A4 (313 aa).

The Extracellular segment spans residues 1–27 (MSIINTSYVEITTFFLVGMPGLEYAHI). Residue Asn-5 is glycosylated (N-linked (GlcNAc...) asparagine). The helical transmembrane segment at 28-48 (WISIPICSMYLIAILGNGTIL) threads the bilayer. Residues 49 to 56 (FIIKTEPS) are Cytoplasmic-facing. The helical transmembrane segment at 57–77 (LHEPMYYFLSMLAMSDLGLSL) threads the bilayer. Over 78 to 101 (SSLPTVLSIFLFNAPEISSNACFA) the chain is Extracellular. Cys-99 and Cys-191 are oxidised to a cystine. A helical membrane pass occupies residues 102–122 (QEFFIHGFSVLESSVLLIMSF). Residues 123-141 (DRFLAIHNPLRYTSILTTV) are Cytoplasmic-facing. The helical transmembrane segment at 142–162 (RVAQIGIVFSFKSMLLVLPFP) threads the bilayer. Residues 163 to 198 (FTLRNLRYCKKNQLSHSYCLHQDVMKLACSDNRIDV) lie on the Extracellular side of the membrane. Residues 199–218 (IYGFFGALCLMVDFILIAVS) traverse the membrane as a helical segment. Topologically, residues 219–238 (YTLILKTVLGIASKKEQLKA) are cytoplasmic. The helical transmembrane segment at 239–259 (LNTCVSHICAVIIFYLPIINL) threads the bilayer. The Extracellular segment spans residues 260-274 (AVVHRFARHVSPLIN). A helical transmembrane segment spans residues 275-295 (VLMANVLLLVPPLTNPIVYCV). The Cytoplasmic segment spans residues 296–313 (KTKQIRVRVVAKLCQRKI).

It belongs to the G-protein coupled receptor 1 family.

The protein localises to the cell membrane. In terms of biological role, odorant receptor. This Homo sapiens (Human) protein is Olfactory receptor 51A4 (OR51A4).